The chain runs to 357 residues: Thiamine thiazole synthase 1, chloroplastic (357 aa).

A chloroplast-targeting transit peptide spans 1–51; the sequence is MSISAAGVATGLGANVELKSNVGSSSSSVAGVRLFTSRKAQLRRCAAPATS. Substrate is bound by residues Ala-103, 123–124, Gly-131, and Ala-196; that span reads EQ. Position 225 is a 2,3-didehydroalanine (Cys) (Cys-225). Substrate is bound by residues Asp-227, His-242, Met-294, and 304–306; that span reads RMG.

This sequence belongs to the THI4 family. As to quaternary structure, homooctamer. Fe cation is required as a cofactor. During the catalytic reaction, a sulfide is transferred from Cys-225 to a reaction intermediate, generating a dehydroalanine residue.

Its subcellular location is the plastid. The protein resides in the chloroplast. The enzyme catalyses [ADP-thiazole synthase]-L-cysteine + glycine + NAD(+) = [ADP-thiazole synthase]-dehydroalanine + ADP-5-ethyl-4-methylthiazole-2-carboxylate + nicotinamide + 3 H2O + 2 H(+). Involved in biosynthesis of the thiamine precursor thiazole. Catalyzes the conversion of NAD and glycine to adenosine diphosphate 5-(2-hydroxyethyl)-4-methylthiazole-2-carboxylic acid (ADT), an adenylated thiazole intermediate. The reaction includes an iron-dependent sulfide transfer from a conserved cysteine residue of the protein to a thiazole intermediate. The enzyme can only undergo a single turnover, which suggests it is a suicide enzyme. May have additional roles in adaptation to various stress conditions and in DNA damage tolerance. The protein is Thiamine thiazole synthase 1, chloroplastic of Physcomitrium patens (Spreading-leaved earth moss).